Here is a 374-residue protein sequence, read N- to C-terminus: Severin (374 aa).

Gelsolin-like repeat units lie at residues 58-109 (FTLE…DEYG), 180-220 (EGKT…KCSA), and 278-369 (EVIK…SFLK).

It belongs to the villin/gelsolin family.

In terms of biological role, severin blocks the ends of F-actin and causes the fragmentation and depolymerization of actin filaments. This severin binds stably with actin both in a Ca(2+) dependent and a Ca(2+) independent manner. The chain is Severin (AG8) from Echinococcus granulosus (Hydatid tapeworm).